A 655-amino-acid chain; its full sequence is Fructose-1,6-bisphosphatase class 3 (655 aa).

The protein belongs to the FBPase class 3 family. Mn(2+) is required as a cofactor.

It carries out the reaction beta-D-fructose 1,6-bisphosphate + H2O = beta-D-fructose 6-phosphate + phosphate. It participates in carbohydrate biosynthesis; gluconeogenesis. This is Fructose-1,6-bisphosphatase class 3 from Porphyromonas gingivalis (strain ATCC BAA-308 / W83).